We begin with the raw amino-acid sequence, 112 residues long: uncharacterized protein (112 aa).

The segment at 70–112 (GLYRGRRPPGRDAARPTTAILFAQGRPPLLDQRAPTRRGSHQR) is disordered.

This is an uncharacterized protein from Homo sapiens (Human).